Here is an 833-residue protein sequence, read N- to C-terminus: Multiple RNA-binding domain-containing protein 1 (833 aa).

Residues 2-83 (SRIIIKNIPR…SRIEVHRALD (82 aa)) enclose the RRM 1 domain. The segment at 160-251 (ENEEVFDTEI…DAQAPLSDDE (92 aa)) is disordered. 2 stretches are compositionally biased toward basic and acidic residues: residues 188–205 (AAKRHEGDSIKSTEHDST) and 213–222 (DGREKSSSEL). RRM domains follow at residues 323–401 (KRLF…PAKA), 506–578 (NVLL…KAPR), 619–702 (ATIY…LSHQ), and 721–798 (TKIL…YASN).

This sequence belongs to the RRM MRD1 family.

The protein resides in the nucleus. In terms of biological role, involved in pre-rRNA processing. This chain is Multiple RNA-binding domain-containing protein 1 (mrd1), found in Schizosaccharomyces pombe (strain 972 / ATCC 24843) (Fission yeast).